The chain runs to 290 residues: ATP synthase gamma chain (290 aa).

Belongs to the ATPase gamma chain family. F-type ATPases have 2 components, CF(1) - the catalytic core - and CF(0) - the membrane proton channel. CF(1) has five subunits: alpha(3), beta(3), gamma(1), delta(1), epsilon(1). CF(0) has three main subunits: a, b and c.

The protein resides in the cell inner membrane. Functionally, produces ATP from ADP in the presence of a proton gradient across the membrane. The gamma chain is believed to be important in regulating ATPase activity and the flow of protons through the CF(0) complex. This is ATP synthase gamma chain from Delftia acidovorans (strain DSM 14801 / SPH-1).